A 232-amino-acid polypeptide reads, in one-letter code: Small ribosomal subunit protein uS2 (232 aa).

It belongs to the universal ribosomal protein uS2 family.

This Carboxydothermus hydrogenoformans (strain ATCC BAA-161 / DSM 6008 / Z-2901) protein is Small ribosomal subunit protein uS2.